A 756-amino-acid polypeptide reads, in one-letter code: 1,4-alpha-glucan branching enzyme GlgB (756 aa).

The Nucleophile role is filled by D425. The Proton donor role is filled by E478.

The protein belongs to the glycosyl hydrolase 13 family. GlgB subfamily. In terms of assembly, monomer.

The enzyme catalyses Transfers a segment of a (1-&gt;4)-alpha-D-glucan chain to a primary hydroxy group in a similar glucan chain.. The protein operates within glycan biosynthesis; glycogen biosynthesis. In terms of biological role, catalyzes the formation of the alpha-1,6-glucosidic linkages in glycogen by scission of a 1,4-alpha-linked oligosaccharide from growing alpha-1,4-glucan chains and the subsequent attachment of the oligosaccharide to the alpha-1,6 position. In Cupriavidus necator (strain ATCC 17699 / DSM 428 / KCTC 22496 / NCIMB 10442 / H16 / Stanier 337) (Ralstonia eutropha), this protein is 1,4-alpha-glucan branching enzyme GlgB.